Consider the following 525-residue polypeptide: GMP synthase [glutamine-hydrolyzing] (525 aa).

The region spanning 9-202 (SILIIDFGSQ…VHKIVGLKSD (194 aa)) is the Glutamine amidotransferase type-1 domain. Catalysis depends on Cys86, which acts as the Nucleophile. Catalysis depends on residues His176 and Glu178. A GMPS ATP-PPase domain is found at 203-400 (WTMAAYRAEM…LGLPESFIGR (198 aa)). 230–236 (SGGVDSS) is an ATP binding site.

Homodimer.

It catalyses the reaction XMP + L-glutamine + ATP + H2O = GMP + L-glutamate + AMP + diphosphate + 2 H(+). The protein operates within purine metabolism; GMP biosynthesis; GMP from XMP (L-Gln route): step 1/1. In terms of biological role, catalyzes the synthesis of GMP from XMP. This chain is GMP synthase [glutamine-hydrolyzing], found in Agrobacterium fabrum (strain C58 / ATCC 33970) (Agrobacterium tumefaciens (strain C58)).